A 306-amino-acid chain; its full sequence is tRNA dimethylallyltransferase (306 aa).

Position 9–16 (9–16) interacts with ATP; that stretch reads GPTAVGKT. 11 to 16 provides a ligand contact to substrate; sequence TAVGKT. The tract at residues 34-37 is interaction with substrate tRNA; sequence DSRQ.

It belongs to the IPP transferase family. In terms of assembly, monomer. It depends on Mg(2+) as a cofactor.

It catalyses the reaction adenosine(37) in tRNA + dimethylallyl diphosphate = N(6)-dimethylallyladenosine(37) in tRNA + diphosphate. Functionally, catalyzes the transfer of a dimethylallyl group onto the adenine at position 37 in tRNAs that read codons beginning with uridine, leading to the formation of N6-(dimethylallyl)adenosine (i(6)A). This Roseiflexus castenholzii (strain DSM 13941 / HLO8) protein is tRNA dimethylallyltransferase.